We begin with the raw amino-acid sequence, 189 residues long: Inner membrane-spanning protein YciB (189 aa).

The next 5 membrane-spanning stretches (helical) occupy residues 23–43 (ILLA…FVWW), 54–74 (ITLA…DAAF), 82–102 (VNWL…KTLI), 120–140 (LNLA…YVFK), and 150–170 (FKLF…GVYL).

It belongs to the YciB family.

It localises to the cell inner membrane. Functionally, plays a role in cell envelope biogenesis, maintenance of cell envelope integrity and membrane homeostasis. The sequence is that of Inner membrane-spanning protein YciB from Chromohalobacter salexigens (strain ATCC BAA-138 / DSM 3043 / CIP 106854 / NCIMB 13768 / 1H11).